Here is a 75-residue protein sequence, read N- to C-terminus: uncharacterized protein (75 aa).

A helical transmembrane segment spans residues Leu-12–Val-32.

Its subcellular location is the cell membrane. This is an uncharacterized protein from Bacillus subtilis (strain 168).